Here is a 477-residue protein sequence, read N- to C-terminus: Glycogen synthase (477 aa).

Lys-16 lines the ADP-alpha-D-glucose pocket.

The protein belongs to the glycosyltransferase 1 family. Bacterial/plant glycogen synthase subfamily.

It carries out the reaction [(1-&gt;4)-alpha-D-glucosyl](n) + ADP-alpha-D-glucose = [(1-&gt;4)-alpha-D-glucosyl](n+1) + ADP + H(+). It functions in the pathway glycan biosynthesis; glycogen biosynthesis. In terms of biological role, synthesizes alpha-1,4-glucan chains using ADP-glucose. The protein is Glycogen synthase of Oceanobacillus iheyensis (strain DSM 14371 / CIP 107618 / JCM 11309 / KCTC 3954 / HTE831).